A 604-amino-acid polypeptide reads, in one-letter code: DNA polymerase alpha subunit B (604 aa).

A disordered region spans residues 109–171; that stretch reads ETLLNSYTTP…KYSSRSNRGE (63 aa). Over residues 113–141 the composition is skewed to polar residues; the sequence is NSYTTPSKGSQKRTITTPETPLTKRSVSA. Thr-129 and Thr-132 each carry phosphothreonine. Residues Ser-143, Ser-149, Ser-154, and Ser-156 each carry the phosphoserine modification. The span at 143 to 160 shows a compositional bias: low complexity; that stretch reads SPHQLLSPSSFSPSATPP.

It belongs to the DNA polymerase alpha subunit B family. Component of the alpha DNA polymerase complex (also known as the alpha DNA polymerase-primase complex) consisting of four subunits: the catalytic subunit POLA1, the regulatory subunit POLA2, and the primase complex subunits PRIM1 and PRIM2 respectively. Within the complex, POLA1 directly interacts with PRIM2. Phosphorylated in a cell cycle-dependent manner, in G2/M phase.

It localises to the nucleus. Its function is as follows. Accessory subunit of the DNA polymerase alpha complex (also known as the alpha DNA polymerase-primase complex) which plays an essential role in the initiation of DNA synthesis. During the S phase of the cell cycle, the DNA polymerase alpha complex (composed of a catalytic subunit POLA1, an accessory subunit POLA2 and two primase subunits, the catalytic subunit PRIM1 and the regulatory subunit PRIM2) is recruited to DNA at the replicative forks via direct interactions with MCM10 and WDHD1. The primase subunit of the polymerase alpha complex initiates DNA synthesis by oligomerising short RNA primers on both leading and lagging strands. These primers are initially extended by the polymerase alpha catalytic subunit and subsequently transferred to polymerase delta and polymerase epsilon for processive synthesis on the lagging and leading strand, respectively. This chain is DNA polymerase alpha subunit B (POLA2), found in Bos taurus (Bovine).